Consider the following 343-residue polypeptide: Anthranilate phosphoribosyltransferase (343 aa).

5-phospho-alpha-D-ribose 1-diphosphate is bound by residues glycine 78, 81–82 (GD), threonine 86, 88–91 (NIST), 106–114 (KHGNRSVSS), and serine 118. Glycine 78 contacts anthranilate. Serine 90 serves as a coordination point for Mg(2+). An anthranilate-binding site is contributed by asparagine 109. Residue arginine 164 coordinates anthranilate. Aspartate 223 and glutamate 224 together coordinate Mg(2+).

Belongs to the anthranilate phosphoribosyltransferase family. As to quaternary structure, homodimer. Mg(2+) serves as cofactor.

It carries out the reaction N-(5-phospho-beta-D-ribosyl)anthranilate + diphosphate = 5-phospho-alpha-D-ribose 1-diphosphate + anthranilate. It participates in amino-acid biosynthesis; L-tryptophan biosynthesis; L-tryptophan from chorismate: step 2/5. In terms of biological role, catalyzes the transfer of the phosphoribosyl group of 5-phosphorylribose-1-pyrophosphate (PRPP) to anthranilate to yield N-(5'-phosphoribosyl)-anthranilate (PRA). This chain is Anthranilate phosphoribosyltransferase, found in Chlamydia caviae (strain ATCC VR-813 / DSM 19441 / 03DC25 / GPIC) (Chlamydophila caviae).